Consider the following 255-residue polypeptide: Leucyl/phenylalanyl-tRNA--protein transferase (255 aa).

The protein belongs to the L/F-transferase family.

The protein localises to the cytoplasm. It catalyses the reaction N-terminal L-lysyl-[protein] + L-leucyl-tRNA(Leu) = N-terminal L-leucyl-L-lysyl-[protein] + tRNA(Leu) + H(+). It carries out the reaction N-terminal L-arginyl-[protein] + L-leucyl-tRNA(Leu) = N-terminal L-leucyl-L-arginyl-[protein] + tRNA(Leu) + H(+). The catalysed reaction is L-phenylalanyl-tRNA(Phe) + an N-terminal L-alpha-aminoacyl-[protein] = an N-terminal L-phenylalanyl-L-alpha-aminoacyl-[protein] + tRNA(Phe). Its function is as follows. Functions in the N-end rule pathway of protein degradation where it conjugates Leu, Phe and, less efficiently, Met from aminoacyl-tRNAs to the N-termini of proteins containing an N-terminal arginine or lysine. This is Leucyl/phenylalanyl-tRNA--protein transferase from Burkholderia pseudomallei (strain 1106a).